Here is a 131-residue protein sequence, read N- to C-terminus: Small ribosomal subunit protein uS8 (131 aa).

Belongs to the universal ribosomal protein uS8 family. In terms of assembly, part of the 30S ribosomal subunit. Contacts proteins S5 and S12.

Its function is as follows. One of the primary rRNA binding proteins, it binds directly to 16S rRNA central domain where it helps coordinate assembly of the platform of the 30S subunit. The polypeptide is Small ribosomal subunit protein uS8 (Porphyromonas gingivalis (strain ATCC 33277 / DSM 20709 / CIP 103683 / JCM 12257 / NCTC 11834 / 2561)).